Reading from the N-terminus, the 283-residue chain is Arsenite methyltransferase (283 aa).

This sequence belongs to the methyltransferase superfamily. Arsenite methyltransferase family.

It carries out the reaction arsenic triglutathione + [thioredoxin]-dithiol + S-adenosyl-L-methionine + 2 H2O = methylarsonous acid + [thioredoxin]-disulfide + 3 glutathione + S-adenosyl-L-homocysteine + H(+). The catalysed reaction is arsenic triglutathione + 2 [thioredoxin]-dithiol + 2 S-adenosyl-L-methionine + H2O = dimethylarsinous acid + 2 [thioredoxin]-disulfide + 3 glutathione + 2 S-adenosyl-L-homocysteine + 2 H(+). It catalyses the reaction arsenic triglutathione + 3 [thioredoxin]-dithiol + 3 S-adenosyl-L-methionine = trimethylarsine + 3 [thioredoxin]-disulfide + 3 glutathione + 3 S-adenosyl-L-homocysteine + 3 H(+). Its function is as follows. Catalyzes the transfer of a methyl group from AdoMet to arsenite, producing methylated arsenicals. Involved in the conversion of As(III) to a number of di- and trimethylated species, with trimethylarsine as the end product. Reduces the arsenic toxicity in the cell and may contribute to the global arsenic cycling. In Rhodopseudomonas palustris (strain ATCC BAA-98 / CGA009), this protein is Arsenite methyltransferase.